Reading from the N-terminus, the 491-residue chain is MNTQQLAKLRSIVPEMRRVRHIHFVGIGGAGMGGIAEVLANEGYQISGSDLAPNPVTQQLMNLGATIYFNHRPENVRDASVVVVSSAISADNPEIVAAHEARIPVIRRAEMLAELMRFRHGIAIAGTHGKTTTTAMVSSIYAEAGLDPTFVNGGLVKAAGVHARLGHGRYLIAEADESDASFLHLQPMVAIVTNIEADHMDTYQGDFENLKQTFINFLHNLPFYGRAVMCVDDPVIRELLPRVGRQTTTYGFSEDADVRVEDYQQIGPQGHFTLLRQDKEPMRVTLNAPGRHNALNAAAAVAVATEEGIDDEAILRALESFQGTGRRFDFLGEFPLEPVNGKSGTAMLVDDYGHHPTEVDATIKAARAGWPDKKLVMLFQPHRFTRTRDLYDDFANVLTQVDTLLMLEVYPAGEAPIPGADSRSLCRTIRGRGKIDPILVPDPAQVAEMLAPVLTGNDLILVQGAGNIGKIARSLAEIKLKPQTPEEEQHD.

Position 126–132 (126–132) interacts with ATP; that stretch reads GTHGKTT.

Belongs to the MurCDEF family.

Its subcellular location is the cytoplasm. The enzyme catalyses UDP-N-acetyl-alpha-D-muramate + L-alanine + ATP = UDP-N-acetyl-alpha-D-muramoyl-L-alanine + ADP + phosphate + H(+). It participates in cell wall biogenesis; peptidoglycan biosynthesis. Its function is as follows. Cell wall formation. This chain is UDP-N-acetylmuramate--L-alanine ligase, found in Escherichia coli O1:K1 / APEC.